The following is a 464-amino-acid chain: uncharacterized protein (464 aa).

Disordered stretches follow at residues 290 to 374 (YRKQ…ERPK) and 445 to 464 (ETDD…PLEE). The segment covering 293–302 (QQQWQQQQQQ) has biased composition (low complexity). Positions 303 to 318 (RKVKTPIKKQEAKKKA) are enriched in basic residues. The span at 352–367 (DMKQQQQMEKGTTSKQ) shows a compositional bias: polar residues. The span at 445 to 454 (ETDDEDEENQ) shows a compositional bias: acidic residues.

This is an uncharacterized protein from Macaca fascicularis (Crab-eating macaque).